A 285-amino-acid polypeptide reads, in one-letter code: NAD kinase (285 aa).

Asp-68 acts as the Proton acceptor in catalysis. NAD(+) is bound by residues 68–69 (DG), 142–143 (ND), Arg-153, Lys-170, Asp-172, 183–188 (TAYNLS), and Gln-242.

The protein belongs to the NAD kinase family. It depends on a divalent metal cation as a cofactor.

The protein resides in the cytoplasm. The enzyme catalyses NAD(+) + ATP = ADP + NADP(+) + H(+). Its function is as follows. Involved in the regulation of the intracellular balance of NAD and NADP, and is a key enzyme in the biosynthesis of NADP. Catalyzes specifically the phosphorylation on 2'-hydroxyl of the adenosine moiety of NAD to yield NADP. The sequence is that of NAD kinase from Syntrophotalea carbinolica (strain DSM 2380 / NBRC 103641 / GraBd1) (Pelobacter carbinolicus).